A 241-amino-acid chain; its full sequence is Leucyl/phenylalanyl-tRNA--protein transferase (241 aa).

This sequence belongs to the L/F-transferase family.

Its subcellular location is the cytoplasm. It catalyses the reaction N-terminal L-lysyl-[protein] + L-leucyl-tRNA(Leu) = N-terminal L-leucyl-L-lysyl-[protein] + tRNA(Leu) + H(+). It carries out the reaction N-terminal L-arginyl-[protein] + L-leucyl-tRNA(Leu) = N-terminal L-leucyl-L-arginyl-[protein] + tRNA(Leu) + H(+). The catalysed reaction is L-phenylalanyl-tRNA(Phe) + an N-terminal L-alpha-aminoacyl-[protein] = an N-terminal L-phenylalanyl-L-alpha-aminoacyl-[protein] + tRNA(Phe). Its function is as follows. Functions in the N-end rule pathway of protein degradation where it conjugates Leu, Phe and, less efficiently, Met from aminoacyl-tRNAs to the N-termini of proteins containing an N-terminal arginine or lysine. This chain is Leucyl/phenylalanyl-tRNA--protein transferase, found in Neisseria meningitidis serogroup C / serotype 2a (strain ATCC 700532 / DSM 15464 / FAM18).